An 887-amino-acid chain; its full sequence is Phosphatidylinositol 3-kinase catalytic subunit type 3 (887 aa).

In terms of domain architecture, C2 PI3K-type spans 35-184 (YKAVLEDPML…LAKLTKAHRQ (150 aa)). The disordered stretch occupies residues 149–170 (VEADGSEPTRTPGRTSSTLSED). A compositionally biased stretch (polar residues) spans 156–170 (PTRTPGRTSSTLSED). At Thr163 the chain carries Phosphothreonine; by AMPK. Ser165 is modified (phosphoserine; by AMPK). A phosphoserine mark is found at Ser244, Ser261, and Ser282. One can recognise a PIK helical domain in the interval 283–520 (DHDLKPNATT…PKTHEMYLNV (238 aa)). Positions 415–466 (LEPTKKDSQTSASESLSNSGVSSGDIDSSQIITNPLPPVASPPPASKAKEVS) are disordered. Positions 425–437 (SASESLSNSGVSS) are enriched in low complexity. The span at 449–459 (PLPPVASPPPA) shows a compositional bias: pro residues. The PI3K/PI4K catalytic domain occupies 605–871 (IPETATLFKS…LIDESVHALF (267 aa)). The tract at residues 611–617 (LFKSALM) is G-loop. Positions 740-748 (GVGDRHLDN) are catalytic loop. The interval 759–780 (HIDFGYILGRDPKPLPPPMKLN) is activation loop.

Belongs to the PI3/PI4-kinase family. Component of the PI3K (PI3KC3/PI3K-III/class III phosphatidylinositol 3-kinase) complex the core of which is composed of the catalytic subunit PIK3C3, the regulatory subunit PIK3R4 and BECN1 associating with additional regulatory/auxiliary subunits to form alternative complex forms. Alternative complex forms containing a fourth regulatory subunit in a mutually exclusive manner are: the PI3K complex I (PI3KC3-C1) containing ATG14, and the PI3K complex II (PI3KC3-C2) containing UVRAG. PI3KC3-C1 displays a V-shaped architecture with PIK3R4 serving as a bridge between PIK3C3 and the ATG14:BECN1 subcomplex. Both, PI3KC3-C1 and PI3KC3-C2, can associate with further regulatory subunits such as RUBCN, SH3GLB1/Bif-1 and AMBRA1. PI3KC3-C1 probably associates with PIK3CB. Interacts with RAB7A in the presence of PIK3R4. Interacts with AMBRA1. Interacts with BECN1P1/BECN2. Interacts with SLAMF1. May be a component of a complex composed of RAB5A (in GDP-bound form), DYN2 and PIK3C3. Interacts with NCKAP1L. Interacts with ATG14; this interaction is increased in the absence of TMEM39A. Interacts with STEEP1; the interaction is STING1-dependent and required for trafficking of STING1 from the endoplasmic reticulum. Interacts with YWHAG. Interacts with ARMC3. Requires Mn(2+) as cofactor. In terms of processing, ubiquitinated via 'Lys-29'- and 'Lys-48'-linked ubiquitination by UBE3C, promoting its degradation. Deubiquitination by ZRANB1/TRABID promotes its stabilization, leading to autophagosome maturation.

The protein resides in the midbody. It is found in the late endosome. Its subcellular location is the cytoplasmic vesicle. The protein localises to the autophagosome. The enzyme catalyses a 1,2-diacyl-sn-glycero-3-phospho-(1D-myo-inositol) + ATP = a 1,2-diacyl-sn-glycero-3-phospho-(1D-myo-inositol-3-phosphate) + ADP + H(+). In terms of biological role, catalytic subunit of the PI3K complex that mediates formation of phosphatidylinositol 3-phosphate; different complex forms are believed to play a role in multiple membrane trafficking pathways: PI3KC3-C1 is involved in initiation of autophagosomes and PI3KC3-C2 in maturation of autophagosomes and endocytosis. As part of PI3KC3-C1, promotes endoplasmic reticulum membrane curvature formation prior to vesicle budding. Involved in regulation of degradative endocytic trafficking and required for the abscission step in cytokinesis, probably in the context of PI3KC3-C2. Involved in the transport of lysosomal enzyme precursors to lysosomes. Required for transport from early to late endosomes. The chain is Phosphatidylinositol 3-kinase catalytic subunit type 3 from Mus musculus (Mouse).